Consider the following 328-residue polypeptide: P2Y purinoceptor 6 (328 aa).

The Extracellular portion of the chain corresponds to 1–27; sequence MERDNGTIQAPGLPPTTCVYREDFKRL. Asn-5 is a glycosylation site (N-linked (GlcNAc...) asparagine). A helical transmembrane segment spans residues 28-48; sequence LLPPVYSVVLVVGLPLNVCVI. Topologically, residues 49 to 62 are cytoplasmic; it reads AQICASRRTLTRSA. Residues 63–83 traverse the membrane as a helical segment; the sequence is VYTLNLALADLLYACSLPLLI. The Extracellular segment spans residues 84–101; that stretch reads YNYARGDHWPFGDLACRL. The cysteines at positions 99 and 177 are disulfide-linked. A helical transmembrane segment spans residues 102–122; it reads VRFLFYANLHGSILFLTCISF. Residues 123–144 lie on the Cytoplasmic side of the membrane; sequence QRYLGICHPLAPWHKRGGRRAA. Residues 145–165 traverse the membrane as a helical segment; sequence WVVCGVVWLVVTAQCLPTAVF. Over 166 to 194 the chain is Extracellular; that stretch reads AATGIQRNRTVCYDLSPPILSTRYLPYGM. The N-linked (GlcNAc...) asparagine glycan is linked to Asn-173. A helical membrane pass occupies residues 195–215; sequence ALTVIGFLLPFTALLACYCRM. Residues 216–236 lie on the Cytoplasmic side of the membrane; that stretch reads ARRLCRQDGPAGPVAQERRSK. The helical transmembrane segment at 237–257 threads the bilayer; it reads AARMAVVVAAVFVISFLPFHI. Residues 258–280 lie on the Extracellular side of the membrane; sequence TKTAYLAVRSTPGVSCPVLETFA. Residues 281-303 form a helical membrane-spanning segment; sequence AAYKGTRPFASANSVLDPILFYF. Residues 304–328 lie on the Cytoplasmic side of the membrane; that stretch reads TQQKFRRQPHDLLQKLTAKWQRQRV.

The protein belongs to the G-protein coupled receptor 1 family. Abundantly expressed in various tissues including lung, stomach, intestine, spleen, mesentery, heart, and, most prominently, aorta.

It is found in the cell membrane. Functionally, receptor for extracellular UTP &gt; ADP = 2-methylthio-ATP &gt; ADP-beta-S &gt; ATP = ATP-gamma-S. The activity of this receptor is mediated by G proteins which activate a phosphatidylinositol-calcium second messenger system. Functionally coupled to phospholipase C. This is P2Y purinoceptor 6 (P2ry6) from Rattus norvegicus (Rat).